Reading from the N-terminus, the 203-residue chain is DNA-binding transcriptional repressor ScoC (203 aa).

The region spanning 13–157 is the HTH marR-type domain; sequence ALVFTQKMAQ…MMCMIRHIYG (145 aa). The segment at residues 63-86 is a DNA-binding region (H-T-H motif); the sequence is ISEIAKFGVMHVSTAFNFSKKLEE. The segment at 183-203 is disordered; sequence KKKAKDSAADEPAEELEPVNS. Over residues 191–203 the composition is skewed to acidic residues; that stretch reads ADEPAEELEPVNS.

As to quaternary structure, homodimer. Interacts with SinR.

Negative regulator of protease production and sporulation. Acts by binding directly to the promoter of protease genes (aprE and nprE), and by repressing oligopeptide permease operons (appABCDF and oppABCDF), thereby preventing uptake of oligopeptides required for initiation of sporulation. Acts with SinR as a corepressor of epr expression. Binds to non-m6A-5-methylated 5'-GACGAG-3' sites, tested with scpA; when the target is methylated by DnmA, this repressor no longer binds and transcription is up-regulated. The polypeptide is DNA-binding transcriptional repressor ScoC (Bacillus subtilis (strain 168)).